The chain runs to 118 residues: Small ribosomal subunit protein uS13 (118 aa).

Positions 94–118 are disordered; sequence SLPLRGQRTKTNARTRKGPRKPIRK.

It belongs to the universal ribosomal protein uS13 family. In terms of assembly, part of the 30S ribosomal subunit. Forms a loose heterodimer with protein S19. Forms two bridges to the 50S subunit in the 70S ribosome.

In terms of biological role, located at the top of the head of the 30S subunit, it contacts several helices of the 16S rRNA. In the 70S ribosome it contacts the 23S rRNA (bridge B1a) and protein L5 of the 50S subunit (bridge B1b), connecting the 2 subunits; these bridges are implicated in subunit movement. Contacts the tRNAs in the A and P-sites. In Shewanella frigidimarina (strain NCIMB 400), this protein is Small ribosomal subunit protein uS13.